A 648-amino-acid polypeptide reads, in one-letter code: Probable potassium transport system protein Kup 1 (648 aa).

12 consecutive transmembrane segments (helical) span residues 25 to 45 (LTLGALGVVFGDIGTSPIYAF), 57 to 77 (IVAGEILGVLSLALWALILVV), 113 to 133 (LVMALGAIGAALFYGDGVITP), 153 to 173 (SVSRGEILLITSAILIGLFLM), 184 to 204 (LFGPVCLVWFVTIGGIGLIHI), 219 to 239 (GVLFMANHGVAGMFVMGAVFL), 263 to 283 (WLAIVFPALALNYLGQGAFAL), 312 to 332 (IPLVILATCATVIASQAVITG), 362 to 382 (IYLPTITMLLFVGVMVLVLGF), 391 to 411 (AYGVSVSGTMVVTTCLAFLVV), 417 to 437 (WGWPLTVAVIVPLLLLDLFFF), and 446 to 466 (EGGWVPLIVAGGVGLLIVTWV).

This sequence belongs to the HAK/KUP transporter (TC 2.A.72) family.

Its subcellular location is the cell inner membrane. It carries out the reaction K(+)(in) + H(+)(in) = K(+)(out) + H(+)(out). Transport of potassium into the cell. Likely operates as a K(+):H(+) symporter. This is Probable potassium transport system protein Kup 1 from Rhizorhabdus wittichii (strain DSM 6014 / CCUG 31198 / JCM 15750 / NBRC 105917 / EY 4224 / RW1) (Sphingomonas wittichii).